The sequence spans 937 residues: Periplasmic nitrate reductase (937 aa).

Positions 1 to 42 form a signal peptide, tat-type signal; it reads MTSKIQGKKPTLSRRDFIKSAAAASAAASVGLSIPSVMSAEA. The 62-residue stretch at 49-110 folds into the 4Fe-4S Mo/W bis-MGD-type domain; the sequence is WKWDKSVCRF…FCAKIMYGAD (62 aa). 4 residues coordinate [4Fe-4S] cluster: C56, C59, C63, and C96. Mo-bis(molybdopterin guanine dinucleotide)-binding positions include K98, Q166, N191, C195, 228-235, M433, Q437, N543, 568-569, K591, D618, and 827-836; these read WGANMAEM, SE, and TGRVLEHWHS. W903 serves as a coordination point for substrate. 2 residues coordinate Mo-bis(molybdopterin guanine dinucleotide): N911 and K928.

This sequence belongs to the prokaryotic molybdopterin-containing oxidoreductase family. NasA/NapA/NarB subfamily. Component of the periplasmic nitrate reductase NapAB complex composed of NapA and NapB. [4Fe-4S] cluster is required as a cofactor. The cofactor is Mo-bis(molybdopterin guanine dinucleotide). In terms of processing, predicted to be exported by the Tat system. The position of the signal peptide cleavage has not been experimentally proven.

It is found in the periplasm. The catalysed reaction is 2 Fe(II)-[cytochrome] + nitrate + 2 H(+) = 2 Fe(III)-[cytochrome] + nitrite + H2O. In terms of biological role, catalytic subunit of the periplasmic nitrate reductase complex NapAB. Receives electrons from NapB and catalyzes the reduction of nitrate to nitrite. The chain is Periplasmic nitrate reductase from Helicobacter hepaticus (strain ATCC 51449 / 3B1).